Consider the following 1111-residue polypeptide: Receptor-type guanylate cyclase gcy-7 (1111 aa).

The N-terminal stretch at 1-24 is a signal peptide; sequence MKPFYSMSLVLFLVITLLPKPMFP. Residues 25–488 lie on the Extracellular side of the membrane; that stretch reads QVATGTTGNV…CPKSFVDEYL (464 aa). N-linked (GlcNAc...) asparagine glycans are attached at residues asparagine 80, asparagine 300, asparagine 326, asparagine 353, asparagine 389, asparagine 407, asparagine 430, and asparagine 441. Residues 489 to 509 form a helical membrane-spanning segment; it reads IWVIVAIVVLFLAITAAACGI. Residues 510-1111 lie on the Cytoplasmic side of the membrane; it reads YFSIQARRQE…TLKSDEQLSD (602 aa). Residues 536 to 838 enclose the Protein kinase domain; the sequence is QINSKQKGKG…NDNLMDHVFN (303 aa). Residues 542–550 and lysine 568 each bind ATP; that span reads KGKGEHSVR. The Guanylate cyclase domain occupies 896–1026; the sequence is TIFFSDVVQF…DAVNTASRME (131 aa).

It belongs to the adenylyl cyclase class-4/guanylyl cyclase family. As to expression, expressed asymmetrically in ASE left (ASEL) sensory neuron. Expressed in excretory canal cell.

It is found in the cell membrane. It carries out the reaction GTP = 3',5'-cyclic GMP + diphosphate. Guanylate cyclase involved in the production of the second messenger cGMP. Unlike other guanylate cyclases expressed in ASE neurons, may not play a role in chemotaxis responses toward salt ions in ASEL (ASE left) sensory neurons. The polypeptide is Receptor-type guanylate cyclase gcy-7 (Caenorhabditis elegans).